Consider the following 628-residue polypeptide: Monoterpene synthase like 2, chloroplastic (628 aa).

3 residues coordinate Mg(2+): D379, D383, and D531. The short motif at 379 to 383 is the DDXXD motif element; that stretch reads DDIYD.

The protein belongs to the terpene synthase family. Tpsd subfamily. Requires Mg(2+) as cofactor. Mn(2+) is required as a cofactor.

It is found in the plastid. The protein resides in the chloroplast. It participates in terpene metabolism; oleoresin biosynthesis. The protein operates within secondary metabolite biosynthesis; terpenoid biosynthesis. In terms of biological role, monoterpene synthase (TPS) involved in the biosynthesis of monoterpene natural products included in conifer oleoresin secretions and volatile emissions; these compounds contribute to biotic and abiotic stress defense against herbivores and pathogens. The chain is Monoterpene synthase like 2, chloroplastic from Pinus banksiana (Jack pine).